The chain runs to 141 residues: Succinate dehydrogenase assembly factor 2, mitochondrial (141 aa).

Belongs to the SDHAF2 family. As to quaternary structure, interacts with the flavoprotein subunit within the SDH catalytic dimer.

It is found in the mitochondrion matrix. Functionally, plays an essential role in the assembly of succinate dehydrogenase (SDH), an enzyme complex (also referred to as respiratory complex II) that is a component of both the tricarboxylic acid (TCA) cycle and the mitochondrial electron transport chain, and which couples the oxidation of succinate to fumarate with the reduction of ubiquinone (coenzyme Q) to ubiquinol. Required for flavinylation (covalent attachment of FAD) of the flavoprotein subunit of the SDH catalytic dimer. This is Succinate dehydrogenase assembly factor 2, mitochondrial from Dictyostelium discoideum (Social amoeba).